The primary structure comprises 294 residues: Polyketide transferase grgF (294 aa).

Residues Cys-115, Asp-240, and His-269 contribute to the active site.

The protein belongs to the polyketide transferase af380 family. As to quaternary structure, homodimer.

The protein operates within secondary metabolite biosynthesis. Its function is as follows. Polyketide transferase; part of the gene cluster that mediates the biosynthesis of gregatin A, a fungal polyketide featuring an alkylated furanone core. The PKS grgA synthesizes C11 and C4 polyketide chains in the presence and absence of the trans-enoyl reductase grgB, respectively. The polyketide transferase grgF is then responsible for the fusion of the two carbon chains to produce the furanone skeleton of gregatin A. GrgF first undergoes a conformational change to an open form, and the active site Cys-115 is acylated by the C11 chain. After the elimination of the phosphopantetheinyl chain, the second polyketide chain of four carbons long is delivered adjacent to the enzyme-bound C11 chain. The catalytic histidine, His-269, deprotonates a proton from C-2 of the long chain, and the resultant carbanion attacks the C-1 carbonyl of the crotonyl group to perform Claisen condensation, by which the phosphopantetheinyl chain is released. Eventually, hydrolysis of the thioester linkage probably by a His-269-activated water molecule completes the reaction to afford the grgF final product. Next, the cytochrome P450 monooxygenase grgG accepts the unstable grgF final product as substrate and performs the oxidative cyclization to furnish the gregatin scaffold and leads to the formation of desmethylgregatin A. Finally, the O-methyltransferase grgD methylates the carboxyl group of desmethylgregatin A to provide gregatin A. This Penicillium sp protein is Polyketide transferase grgF.